The sequence spans 282 residues: Putative hydrolase Bamb_4846 (282 aa).

Mg(2+)-binding residues include Glu-124, Glu-126, and Asp-155.

Belongs to the FAH family. The cofactor is Mg(2+).

The protein is Putative hydrolase Bamb_4846 of Burkholderia ambifaria (strain ATCC BAA-244 / DSM 16087 / CCUG 44356 / LMG 19182 / AMMD) (Burkholderia cepacia (strain AMMD)).